We begin with the raw amino-acid sequence, 316 residues long: MPGQNYRTISEFILSGFSAFPQQLLPVLFLLYLLMFLFTLLGNLLIMATVWIERRLHTPMYLFLCALSISEILFTVAITPRMLADLLFTHRSITFVACAIQMFFSFMFGFTHSFLLMVMGYDHYVTICHPLHYNMLMSPRGCAHLVAWTWAGGSVMGMMVTMMVFHLTFCGSNVIHHFLCHVLSLLKLACGSKTSSVIMGVMLVCVTALIGCLFLIILSFVFIVAAILRIPSAEGRHKTFSTCVSHLTVVVMHYSFASLIYLKPKGLHSMYSDALMATTYTVFTPFLSPIIFSLRNKELKNAINKNFCRRFCPLSS.

Topologically, residues 1–25 (MPGQNYRTISEFILSGFSAFPQQLL) are extracellular. A helical membrane pass occupies residues 26-46 (PVLFLLYLLMFLFTLLGNLLI). Topologically, residues 47–54 (MATVWIER) are cytoplasmic. The chain crosses the membrane as a helical span at residues 55 to 75 (RLHTPMYLFLCALSISEILFT). The Extracellular segment spans residues 76–99 (VAITPRMLADLLFTHRSITFVACA). C98 and C190 are oxidised to a cystine. Residues 100 to 120 (IQMFFSFMFGFTHSFLLMVMG) form a helical membrane-spanning segment. The Cytoplasmic segment spans residues 121 to 139 (YDHYVTICHPLHYNMLMSP). Residues 140–160 (RGCAHLVAWTWAGGSVMGMMV) form a helical membrane-spanning segment. At 161–197 (TMMVFHLTFCGSNVIHHFLCHVLSLLKLACGSKTSSV) the chain is on the extracellular side. The chain crosses the membrane as a helical span at residues 198–218 (IMGVMLVCVTALIGCLFLIIL). Over 219 to 238 (SFVFIVAAILRIPSAEGRHK) the chain is Cytoplasmic. A helical transmembrane segment spans residues 239-259 (TFSTCVSHLTVVVMHYSFASL). Topologically, residues 260 to 272 (IYLKPKGLHSMYS) are extracellular. Residues 273–293 (DALMATTYTVFTPFLSPIIFS) form a helical membrane-spanning segment. At 294 to 316 (LRNKELKNAINKNFCRRFCPLSS) the chain is on the cytoplasmic side.

This sequence belongs to the G-protein coupled receptor 1 family.

The protein resides in the cell membrane. In terms of biological role, odorant receptor. The chain is Olfactory receptor 10H3 (OR10H3) from Homo sapiens (Human).